Reading from the N-terminus, the 152-residue chain is Large ribosomal subunit protein eL32 (152 aa).

It belongs to the eukaryotic ribosomal protein eL32 family.

The protein is Large ribosomal subunit protein eL32 (rpl32e) of Pyrobaculum aerophilum (strain ATCC 51768 / DSM 7523 / JCM 9630 / CIP 104966 / NBRC 100827 / IM2).